The following is a 99-amino-acid chain: Malonate decarboxylase acyl carrier protein (99 aa).

At S25 the chain carries O-(phosphoribosyl dephospho-coenzyme A)serine.

In terms of processing, covalently binds the prosthetic group of malonate decarboxylase.

It localises to the cytoplasm. Subunit of malonate decarboxylase, it is an acyl carrier protein to which acetyl and malonyl thioester residues are bound via a 2'-(5''-phosphoribosyl)-3'-dephospho-CoA prosthetic group and turn over during the catalytic mechanism. The chain is Malonate decarboxylase acyl carrier protein (mdcC) from Klebsiella pneumoniae.